The chain runs to 712 residues: Secretin OutD (712 aa).

Positions 1-27 (MLGKGIKKSWGWLGLTVLLLGSPCGWA) are cleaved as a signal peptide. Residues 28 to 124 (AEFSASFKGT…LANNEQPGVG (97 aa)) are N0. Positions 126-190 (ELVTRVVPLN…DIVNTVDKTG (65 aa)) are N1. The interval 191 to 264 (DREMITVSLN…MIRQLDRKQV (74 aa)) is N2. The segment at 267 to 394 (GGTKVIYLKY…DLEQVINQLD (128 aa)) is N3. The interval 288–342 (GNGTSGNRNSSSTNSSRPSSTRSSSTLNNSNSSSSGSSSGSGSSSSSSSSSMGFG) is disordered. The interval 399 to 651 (QVLVEAIIAE…LFLRPTIIRD (253 aa)) is secretin. A s domain region spans residues 653-712 (QQYQQASISKYNSFNNEQQQQRGQGNSVLDNNTLRLSGGNTYTFRQVQSSISAFYQPEGR).

It belongs to the bacterial secretin family. GSP D subfamily. In terms of assembly, forms a cylindrical channel with 15 subunits.

The protein resides in the cell outer membrane. Its function is as follows. Involved in a type II secretion system (T2SS, formerly general secretion pathway, GSP) for the export of proteins. Required for the translocation of the multiple pectic enzymes. This subunit forms the outer membrane channel. The sequence is that of Secretin OutD (outD) from Dickeya chrysanthemi (Pectobacterium chrysanthemi).